Consider the following 120-residue polypeptide: Large ribosomal subunit protein bL17 (120 aa).

Belongs to the bacterial ribosomal protein bL17 family. Part of the 50S ribosomal subunit. Contacts protein L32.

The chain is Large ribosomal subunit protein bL17 from Geobacillus thermodenitrificans (strain NG80-2).